The chain runs to 302 residues: Rhomboid-related protein 2 (302 aa).

Residues 1–38 are disordered; it reads MAVAHEMEMESVNLNMEREGKEEPEEEKMKGNGEGKDF. A compositionally biased stretch (basic and acidic residues) spans 16 to 38; that stretch reads MEREGKEEPEEEKMKGNGEGKDF. 7 consecutive transmembrane segments (helical) span residues 71–91, 127–147, 158–178, 182–202, 211–231, 244–264, and 277–297; these read PLFI…YAVW, LVHA…VLGI, VGLV…IFDP, LVGA…NVIV, FGIV…GFAL, VSFA…YTVF, and FWIA…FNIF. Ser-186 serves as the catalytic Nucleophile. His-249 is a catalytic residue.

This sequence belongs to the peptidase S54 family. Proteolytic processing of the proenzyme produces an N- and a C-terminal fragment. The processing is required for activation of the protease.

The protein resides in the cell membrane. It catalyses the reaction Cleaves type-1 transmembrane domains using a catalytic dyad composed of serine and histidine that are contributed by different transmembrane domains.. In terms of biological role, involved in regulated intramembrane proteolysis and the subsequent release of functional polypeptides from their membrane anchors. Known substrate: EFNB3. This chain is Rhomboid-related protein 2 (Rhbdl2), found in Mus musculus (Mouse).